The primary structure comprises 313 residues: Ornithine carbamoyltransferase (313 aa).

Residues 57-60 (STRT), Gln-84, Arg-108, and 135-138 (HPTQ) contribute to the carbamoyl phosphate site. L-ornithine contacts are provided by residues Asn-167, Asp-231, and 235-236 (SM). Carbamoyl phosphate-binding positions include 272–273 (CL) and Arg-300.

This sequence belongs to the aspartate/ornithine carbamoyltransferase superfamily. OTCase family.

Its subcellular location is the cytoplasm. It carries out the reaction carbamoyl phosphate + L-ornithine = L-citrulline + phosphate + H(+). Its pathway is amino-acid biosynthesis; L-arginine biosynthesis; L-arginine from L-ornithine and carbamoyl phosphate: step 1/3. In terms of biological role, reversibly catalyzes the transfer of the carbamoyl group from carbamoyl phosphate (CP) to the N(epsilon) atom of ornithine (ORN) to produce L-citrulline. The chain is Ornithine carbamoyltransferase from Caldanaerobacter subterraneus subsp. tengcongensis (strain DSM 15242 / JCM 11007 / NBRC 100824 / MB4) (Thermoanaerobacter tengcongensis).